Here is a 556-residue protein sequence, read N- to C-terminus: Melanoma-associated antigen B4 (556 aa).

The span at 1-15 (MPRGQKSKARAREKR) shows a compositional bias: basic residues. The disordered stretch occupies residues 1–110 (MPRGQKSKAR…RFSENPQNDL (110 aa)). The span at 39–73 (PSCSNQDSGDAVASTSTAGFPQKSKSQGEAPTTTA) shows a compositional bias: polar residues. Positions 77–87 (GACRRSRKSTR) are enriched in basic residues. Residues 111-310 (LTRKTGMLMQ…QAFPTHYEEA (200 aa)) enclose the MAGE domain. Positions 315–335 (EERAQAEAVGSPGTSAKDKAE) are disordered. Residue serine 325 is modified to Phosphoserine. 15 tandem repeats follow at residues 334 to 348 (AEAKVTLVDSSCKYQ), 349 to 363 (AESKVTLVDSSCKDQ), 364 to 378 (AESKVTLVDPSCKDN), 379 to 392 (AKSKVTLGSSRKYK), 393 to 407 (AKSKVPLVDSSCKDQ), 408 to 421 (AESKVTLVDSCKDQ), 422 to 436 (AESKVTLVDSSCKDQ), 437 to 451 (AESKVTLVDSSCKDQ), 452 to 466 (AESKVTLVDPSCKDK), 467 to 480 (AKSKVTLGSSHKYK), 481 to 495 (AKSKVTLVDSSCKDQ), 496 to 510 (AESKVTLVDSSCKDQ), 511 to 525 (AESKVTLVDPSCKDN), 526 to 539 (AKSKVTLGSSRKYK), and 540 to 554 (AKSKVPLVDSSGKDK). The 15 X 15 AA approximate tandem repeats stretch occupies residues 334–554 (AEAKVTLVDS…PLVDSSGKDK (221 aa)).

Expressed in testis (at protein level).

Its subcellular location is the cytoplasm. This is Melanoma-associated antigen B4 from Mus musculus (Mouse).